A 267-amino-acid chain; its full sequence is DNA damage-regulated autophagy modulator protein 2 (267 aa).

The next 6 membrane-spanning stretches (helical) occupy residues 8–28 (LSFL…FSYI), 53–73 (RCLF…TIYV), 87–107 (LIIK…LGLS), 118–138 (FIVH…YMFV), 160–180 (LLLV…SSIL), and 203–223 (VLHI…FGFF).

Belongs to the DRAM/TMEM150 family.

The protein resides in the lysosome membrane. It localises to the photoreceptor inner segment. It is found in the apical cell membrane. Functionally, plays a role in the initiation of autophagy. In the retina, might be involved in the process of photoreceptor cells renewal and recycling to preserve visual function. Induces apoptotic cell death when coexpressed with DRAM1. The polypeptide is DNA damage-regulated autophagy modulator protein 2 (Dram2) (Rattus norvegicus (Rat)).